The sequence spans 94 residues: Co-chaperonin GroES (94 aa).

It belongs to the GroES chaperonin family. In terms of assembly, heptamer of 7 subunits arranged in a ring. Interacts with the chaperonin GroEL.

Its subcellular location is the cytoplasm. Together with the chaperonin GroEL, plays an essential role in assisting protein folding. The GroEL-GroES system forms a nano-cage that allows encapsulation of the non-native substrate proteins and provides a physical environment optimized to promote and accelerate protein folding. GroES binds to the apical surface of the GroEL ring, thereby capping the opening of the GroEL channel. This chain is Co-chaperonin GroES, found in Bacillus sp. (strain PS3).